The sequence spans 317 residues: Protein translocase subunit SecF (317 aa).

6 helical membrane passes run F11–L31, R135–F155, I166–L186, L197–F217, L244–G266, and L276–W298.

It belongs to the SecD/SecF family. SecF subfamily. As to quaternary structure, forms a complex with SecD. Part of the essential Sec protein translocation apparatus which comprises SecA, SecYEG and auxiliary proteins SecDF. Other proteins may also be involved.

It is found in the cell membrane. Part of the Sec protein translocase complex. Interacts with the SecYEG preprotein conducting channel. SecDF uses the proton motive force (PMF) to complete protein translocation after the ATP-dependent function of SecA. This chain is Protein translocase subunit SecF, found in Thermobaculum terrenum (strain ATCC BAA-798 / CCMEE 7001 / YNP1).